The sequence spans 373 residues: Ferroptosis suppressor protein 1 (373 aa).

Residue G2 is the site of N-myristoyl glycine attachment. Residues 7–27 traverse the membrane as a helical segment; the sequence is VDTGAVHVVIVGGGFGGIAAA. Residues 18-22, R54, and V82 each bind 6-hydroxy-FAD; that span reads GGGFG. K168 is modified (N6-acetyllysine). D285 lines the 6-hydroxy-FAD pocket.

It belongs to the FAD-dependent oxidoreductase family. Interacts with importin subunits KPNA2 and IPO5; this interaction likely mediates the translocation into the nucleus upon oxidative stress. 6-hydroxy-FAD is required as a cofactor. In terms of processing, N-myristoylation at Gly-2 mediates the recruitment to lipid droplets and plasma membrane. Post-translationally, acetylation at Lys-168 prevents AIFM2 ubiquitination and degradation, thereby inhibiting ferroptosis. KAT2B mediates acetylation at Lys-168, while HDAC3 removes it. Ubiquitinated. AIFM2 undergoes 'Lys-29'-ubiquitination and proteasomal degradation, which is inhibited by acetylation at Lys-168. As to expression, detected in most normal tissues as two transcripts of 1.8 and 4.0 kb in length, respectively. Highly expressed in liver, testis, and kidney, and expressed at lower levels in pancreas, spleen, brain and lung. Expressed in heart (at protein level).

It localises to the lipid droplet. The protein localises to the cell membrane. Its subcellular location is the cytoplasm. The protein resides in the mitochondrion membrane. It is found in the nucleus. The catalysed reaction is ubiquinone-10 + NADH + H(+) = ubiquinol-10 + NAD(+). It catalyses the reaction phylloquinone + NADH + H(+) = phylloquinol + NAD(+). The enzyme catalyses menaquinone-4 + NADH + H(+) = menaquinol-4 + NAD(+). It carries out the reaction menadione + NADH + H(+) = menadiol + NAD(+). Its activity is regulated as follows. The modification by 4-hydroxy-2-nonenal (HNE) adduction in mitochondria results in loss of the oxidoreductase activity and activation of a novel function in mitochondrial oxidative stress signaling. Its function is as follows. An NAD(P)H-dependent oxidoreductase that acts as a key inhibitor of ferroptosis. At the plasma membrane, catalyzes reduction of coenzyme Q/ubiquinone-10 to ubiquinol-10, a lipophilic radical-trapping antioxidant that prevents lipid oxidative damage and consequently ferroptosis. Acts in parallel to GPX4 to suppress phospholipid peroxidation and ferroptosis. This anti-ferroptotic function is independent of cellular glutathione levels. Also acts as a potent radical-trapping antioxidant by mediating warfarin-resistant vitamin K reduction in the canonical vitamin K cycle: catalyzes NAD(P)H-dependent reduction of vitamin K (phylloquinone, menaquinone-4 and menadione) to hydroquinone forms. Hydroquinones act as potent radical-trapping antioxidants inhibitor of phospholipid peroxidation and ferroptosis. May play a role in mitochondrial stress signaling. Upon oxidative stress, associates with the lipid peroxidation end product 4-hydroxy-2-nonenal (HNE) forming a lipid adduct devoid of oxidoreductase activity, which then translocates from mitochondria into the nucleus triggering DNA damage and cell death. The chain is Ferroptosis suppressor protein 1 from Mus musculus (Mouse).